We begin with the raw amino-acid sequence, 779 residues long: Vezatin (779 aa).

Helical transmembrane passes span 139 to 159 and 162 to 182; these read LATP…LLVM and TWWI…YLVI. Residues 430 to 462 are a coiled coil; the sequence is VRSLQLHLKALLNEVIILEDELEKLVCTKETQE. 2 disordered regions span residues 618-719 and 757-779; these read PVDP…DSLQ and EQTF…IEEK. Polar residues predominate over residues 625-634; it reads ISNSEPSMNS. Residues 638-649 are compositionally biased toward basic and acidic residues; the sequence is KVSKNDTEEESN. Residues 706-719 show a composition bias toward polar residues; that stretch reads GLTTAPPTPRDSLQ. The segment covering 770-779 has biased composition (basic and acidic residues); it reads EENKNEIEEK.

The protein belongs to the vezatin family. Interacts with USH2A (via the cytoplasmic region); the interaction associates VEZT with the USH2 complex at the stereocilia base. Interacts with myosin MYO7A and the cadherin-catenins complex.

The protein resides in the cell membrane. It localises to the cell projection. The protein localises to the stereocilium membrane. It is found in the cell junction. Its subcellular location is the adherens junction. The protein resides in the nucleus. It localises to the cytoplasmic vesicle. The protein localises to the secretory vesicle. It is found in the acrosome. In terms of biological role, plays a pivotal role in the establishment of adherens junctions and their maintenance in adult life. Required for morphogenesis of the preimplantation embryo, and for the implantation process. Its function is as follows. (Microbial infection) In case of Listeria infection, promotes bacterial internalization by participating in myosin VIIa recruitment to the entry site. This is Vezatin (VEZT) from Homo sapiens (Human).